Here is a 229-residue protein sequence, read N- to C-terminus: Meiotically up-regulated gene 31 protein (229 aa).

Disordered regions lie at residues 16–68 and 189–229; these read EDSA…EEDK and GLPE…TTWA.

The protein localises to the endoplasmic reticulum. In terms of biological role, has a role in meiosis. In Schizosaccharomyces pombe (strain 972 / ATCC 24843) (Fission yeast), this protein is Meiotically up-regulated gene 31 protein (mug31).